The primary structure comprises 335 residues: Mycobacterial beta-ketoacyl-[acyl-carrier-protein] synthase III (335 aa).

Residues cysteine 122 and histidine 258 contribute to the active site. Residues glutamine 259–arginine 263 form an ACP-binding region. Asparagine 289 is a catalytic residue.

The protein belongs to the thiolase-like superfamily. FabH family. Homodimer.

The protein resides in the cytoplasm. It carries out the reaction malonyl-[ACP] + dodecanoyl-CoA + H(+) = 3-oxotetradecanoyl-[ACP] + CO2 + CoA. It functions in the pathway lipid metabolism; fatty acid biosynthesis. The protein operates within lipid metabolism; mycolic acid biosynthesis. Functionally, catalyzes the condensation reaction of fatty acid synthesis by the addition to an acyl acceptor of two carbons from malonyl-ACP. Catalyzes the first condensation reaction which initiates fatty acid synthesis and may therefore play a role in governing the total rate of fatty acid production. Possesses both acetoacetyl-ACP synthase and acetyl transacylase activities. Its substrate specificity determines the biosynthesis of branched-chain and/or straight-chain of fatty acids. The polypeptide is Mycobacterial beta-ketoacyl-[acyl-carrier-protein] synthase III (Mycobacterium avium (strain 104)).